Here is a 453-residue protein sequence, read N- to C-terminus: uncharacterized protein (453 aa).

Cys-74, Cys-80, Cys-83, and Cys-162 together coordinate [4Fe-4S] cluster. Residues Gln-286, Tyr-315, Glu-336, and Asp-384 each coordinate S-adenosyl-L-methionine. Cys-411 acts as the Nucleophile in catalysis.

The protein belongs to the class I-like SAM-binding methyltransferase superfamily. RNA M5U methyltransferase family.

This is an uncharacterized protein from Staphylococcus aureus (strain Mu50 / ATCC 700699).